We begin with the raw amino-acid sequence, 632 residues long: Threonine--tRNA ligase (632 aa).

The 61-residue stretch at 1-61 folds into the TGS domain; it reads MPIVTLPDGS…EHDAEVSILT (61 aa). Positions 242 to 533 are catalytic; that stretch reads DHRKLARKLD…LIEHYAGSMP (292 aa). Residues Cys333, His384, and His510 each coordinate Zn(2+).

It belongs to the class-II aminoacyl-tRNA synthetase family. In terms of assembly, homodimer. Requires Zn(2+) as cofactor.

It is found in the cytoplasm. It carries out the reaction tRNA(Thr) + L-threonine + ATP = L-threonyl-tRNA(Thr) + AMP + diphosphate + H(+). Its function is as follows. Catalyzes the attachment of threonine to tRNA(Thr) in a two-step reaction: L-threonine is first activated by ATP to form Thr-AMP and then transferred to the acceptor end of tRNA(Thr). Also edits incorrectly charged L-seryl-tRNA(Thr). The polypeptide is Threonine--tRNA ligase (Chromohalobacter salexigens (strain ATCC BAA-138 / DSM 3043 / CIP 106854 / NCIMB 13768 / 1H11)).